The following is a 384-amino-acid chain: S-adenosylmethionine synthase (384 aa).

His15 provides a ligand contact to ATP. Asp17 is a binding site for Mg(2+). K(+) is bound at residue Glu43. L-methionine is bound by residues Glu56 and Gln99. The tract at residues 99–109 (QSPDINQGVDR) is flexible loop. ATP-binding positions include 164 to 166 (DAK), 230 to 231 (RF), Asp239, 245 to 246 (RK), Ala262, and Lys266. Asp239 lines the L-methionine pocket. Residue Lys270 participates in L-methionine binding.

Belongs to the AdoMet synthase family. In terms of assembly, homotetramer; dimer of dimers. Mg(2+) is required as a cofactor. Requires K(+) as cofactor.

It localises to the cytoplasm. The enzyme catalyses L-methionine + ATP + H2O = S-adenosyl-L-methionine + phosphate + diphosphate. The protein operates within amino-acid biosynthesis; S-adenosyl-L-methionine biosynthesis; S-adenosyl-L-methionine from L-methionine: step 1/1. In terms of biological role, catalyzes the formation of S-adenosylmethionine (AdoMet) from methionine and ATP. The overall synthetic reaction is composed of two sequential steps, AdoMet formation and the subsequent tripolyphosphate hydrolysis which occurs prior to release of AdoMet from the enzyme. The protein is S-adenosylmethionine synthase of Klebsiella pneumoniae (strain 342).